The following is a 418-amino-acid chain: Histidinol dehydrogenase (418 aa).

NAD(+) is bound by residues Y119, Q180, and N203. T226, Q248, and H251 together coordinate substrate. Zn(2+) is bound by residues Q248 and H251. Residues E316 and H317 each act as proton acceptor in the active site. H317, D350, E404, and H409 together coordinate substrate. D350 contributes to the Zn(2+) binding site. H409 contributes to the Zn(2+) binding site.

The protein belongs to the histidinol dehydrogenase family. Zn(2+) serves as cofactor.

The enzyme catalyses L-histidinol + 2 NAD(+) + H2O = L-histidine + 2 NADH + 3 H(+). Its pathway is amino-acid biosynthesis; L-histidine biosynthesis; L-histidine from 5-phospho-alpha-D-ribose 1-diphosphate: step 9/9. In terms of biological role, catalyzes the sequential NAD-dependent oxidations of L-histidinol to L-histidinaldehyde and then to L-histidine. This is Histidinol dehydrogenase from Staphylococcus aureus (strain MSSA476).